A 426-amino-acid polypeptide reads, in one-letter code: MKQLRLNPISKVHGTVNIPGSKSISNRALLLATLAEGKTRLTNLLDSDDIRHMLTALKQLGVNYQLSDNNRVCEVEGLSGVINSDTAQTLFLGNAGTAMRPLCAALTLGSGEFTLTGEPRMEERPIGDLVDALNALGADIRYLKQPGFPPLTINATGLNGGDVEIAGDLSSQFLTALLMVTPLAKAQVNIKIKGELVSKPYIDITIALMAQFGVTVINHDYQRFEIPAGQKYVSPGTVLVEGDASSASYFLAAGAIQGGEVKVTGVGLKSIQGDVKFAEVLEAMGAQIEWGDDFIIARSAPLHGVDLDMNHIPDAAMTIATAALFATGTTTLRNIYNWRIKETDRLAAMATELRKVGAEVEEGHDYIRVTAPAQLNTADIDTYNDHRMAMCFSLMAFADCGITINDPDCTSKTFPDYFAQFAALAQ.

Positions 22, 23, and 27 each coordinate 3-phosphoshikimate. Phosphoenolpyruvate is bound at residue Lys-22. Phosphoenolpyruvate contacts are provided by Gly-96 and Arg-124. Residues Ser-170, Ser-171, Gln-172, Ser-198, Asp-314, Asn-337, and Lys-341 each coordinate 3-phosphoshikimate. Gln-172 contacts phosphoenolpyruvate. Residue Asp-314 is the Proton acceptor of the active site. Residues Arg-345, Arg-387, and Lys-412 each coordinate phosphoenolpyruvate.

This sequence belongs to the EPSP synthase family. In terms of assembly, monomer.

It is found in the cytoplasm. The catalysed reaction is 3-phosphoshikimate + phosphoenolpyruvate = 5-O-(1-carboxyvinyl)-3-phosphoshikimate + phosphate. It functions in the pathway metabolic intermediate biosynthesis; chorismate biosynthesis; chorismate from D-erythrose 4-phosphate and phosphoenolpyruvate: step 6/7. In terms of biological role, catalyzes the transfer of the enolpyruvyl moiety of phosphoenolpyruvate (PEP) to the 5-hydroxyl of shikimate-3-phosphate (S3P) to produce enolpyruvyl shikimate-3-phosphate and inorganic phosphate. In Shewanella loihica (strain ATCC BAA-1088 / PV-4), this protein is 3-phosphoshikimate 1-carboxyvinyltransferase.